Here is a 305-residue protein sequence, read N- to C-terminus: tRNA uridine(34) hydroxylase (305 aa).

The 95-residue stretch at 125-219 (ADENTVVVDK…YLEEVPREQS (95 aa)) folds into the Rhodanese domain. Cys179 serves as the catalytic Cysteine persulfide intermediate.

The protein belongs to the TrhO family.

The catalysed reaction is uridine(34) in tRNA + AH2 + O2 = 5-hydroxyuridine(34) in tRNA + A + H2O. Catalyzes oxygen-dependent 5-hydroxyuridine (ho5U) modification at position 34 in tRNAs. The chain is tRNA uridine(34) hydroxylase from Brucella abortus (strain S19).